Here is a 134-residue protein sequence, read N- to C-terminus: MTVSSIFPPAADKTALERGAAIMPRFDANGLVAAIAQHADTGEILMFAWMNDEALKLTLDTGIAHYFSRSRNSLWKKGETSGQLQIVTELRIDCDQDAVLIKVRPQGDGGACHVGFRSCFYRVWENGALVEREA.

Aspartate 93 is a Mg(2+) binding site. Cysteine 94 serves as a coordination point for Zn(2+). Mg(2+) is bound by residues aspartate 95 and aspartate 97. Positions 112 and 119 each coordinate Zn(2+).

It belongs to the PRA-CH family. In terms of assembly, homodimer. Requires Mg(2+) as cofactor. It depends on Zn(2+) as a cofactor.

The protein localises to the cytoplasm. It carries out the reaction 1-(5-phospho-beta-D-ribosyl)-5'-AMP + H2O = 1-(5-phospho-beta-D-ribosyl)-5-[(5-phospho-beta-D-ribosylamino)methylideneamino]imidazole-4-carboxamide. It functions in the pathway amino-acid biosynthesis; L-histidine biosynthesis; L-histidine from 5-phospho-alpha-D-ribose 1-diphosphate: step 3/9. In terms of biological role, catalyzes the hydrolysis of the adenine ring of phosphoribosyl-AMP. This is Phosphoribosyl-AMP cyclohydrolase from Caulobacter sp. (strain K31).